Reading from the N-terminus, the 238-residue chain is Putative type I specificity subunit S.MpnORF201P (238 aa).

The protein belongs to the type-I restriction system S methylase family. In terms of assembly, the methyltransferase is composed of M and S polypeptides.

The specificity (S) subunit of a type I methyltransferase (MTase); this subunit dictates DNA sequence specificity. The single R subunit has multiple frameshifts and is probably not expressed. The chain is Putative type I specificity subunit S.MpnORF201P from Mycoplasma pneumoniae (strain ATCC 29342 / M129 / Subtype 1) (Mycoplasmoides pneumoniae).